The following is a 46-amino-acid chain: Acetylajmalan esterase (46 aa).

The N-linked (GlcNAc...) asparagine glycan is linked to N39.

This sequence belongs to the 'GDSL' lipolytic enzyme family.

It carries out the reaction 17-O-acetylajmaline + H2O = ajmaline + acetate + H(+). The catalysed reaction is 17-O-acetylnorajmaline + H2O = norajmaline + acetate + H(+). Functionally, deacetylates 17-O-acetylajmaline and 17-O-acetylnorajmaline, but is inactive toward other acetylated alkaloids. The chain is Acetylajmalan esterase from Rauvolfia verticillata (Common devil-pepper).